The primary structure comprises 582 residues: Transcription factor PCF5 (582 aa).

Disordered regions lie at residues 30–78 and 123–195; these read AAGK…QHDH and SPMG…GGGG. Positions 51 to 64 are enriched in gly residues; sequence GGDGGGVGGGGSGG. The TCP domain maps to 213–271; that stretch reads RKDRHSKVCTARGPRDRRVRLSAHTAIQFYDVQDRLGYDRPSKAVDWLIKNAKDAIDKL. Disordered regions lie at residues 283–306, 402–423, and 548–582; these read GAGA…ENSD, MFHH…TTQQ, and RLPA…ASHH.

Forms homodimers and heterodimers with PCF2.

It is found in the nucleus. Functionally, transcription activator. Binds the promoter core sequence 5'-GGNCC-3'. This chain is Transcription factor PCF5 (PCF5), found in Oryza sativa subsp. indica (Rice).